The primary structure comprises 153 residues: 6,7-dimethyl-8-ribityllumazine synthase (153 aa).

Residues Phe22, 56–58 (AFE), and 80–82 (AVI) each bind 5-amino-6-(D-ribitylamino)uracil. 85-86 (AT) is a binding site for (2S)-2-hydroxy-3-oxobutyl phosphate. Catalysis depends on His88, which acts as the Proton donor. Phe113 provides a ligand contact to 5-amino-6-(D-ribitylamino)uracil. (2S)-2-hydroxy-3-oxobutyl phosphate is bound at residue Arg127.

This sequence belongs to the DMRL synthase family.

The catalysed reaction is (2S)-2-hydroxy-3-oxobutyl phosphate + 5-amino-6-(D-ribitylamino)uracil = 6,7-dimethyl-8-(1-D-ribityl)lumazine + phosphate + 2 H2O + H(+). It functions in the pathway cofactor biosynthesis; riboflavin biosynthesis; riboflavin from 2-hydroxy-3-oxobutyl phosphate and 5-amino-6-(D-ribitylamino)uracil: step 1/2. Functionally, catalyzes the formation of 6,7-dimethyl-8-ribityllumazine by condensation of 5-amino-6-(D-ribitylamino)uracil with 3,4-dihydroxy-2-butanone 4-phosphate. This is the penultimate step in the biosynthesis of riboflavin. The protein is 6,7-dimethyl-8-ribityllumazine synthase of Clostridium tetani (strain Massachusetts / E88).